The primary structure comprises 97 residues: Co-chaperonin GroES (97 aa).

The protein belongs to the GroES chaperonin family. As to quaternary structure, heptamer of 7 subunits arranged in a ring. Interacts with the chaperonin GroEL.

The protein localises to the cytoplasm. Functionally, together with the chaperonin GroEL, plays an essential role in assisting protein folding. The GroEL-GroES system forms a nano-cage that allows encapsulation of the non-native substrate proteins and provides a physical environment optimized to promote and accelerate protein folding. GroES binds to the apical surface of the GroEL ring, thereby capping the opening of the GroEL channel. This is Co-chaperonin GroES from Elusimicrobium minutum (strain Pei191).